The primary structure comprises 207 residues: Holliday junction branch migration complex subunit RuvA (207 aa).

The domain I stretch occupies residues Met1 to Asn64. Residues Thr65–Pro143 form a domain II region. A flexible linker region spans residues Ala144–Thr158. The interval Ser159–Ile207 is domain III.

It belongs to the RuvA family. Homotetramer. Forms an RuvA(8)-RuvB(12)-Holliday junction (HJ) complex. HJ DNA is sandwiched between 2 RuvA tetramers; dsDNA enters through RuvA and exits via RuvB. An RuvB hexamer assembles on each DNA strand where it exits the tetramer. Each RuvB hexamer is contacted by two RuvA subunits (via domain III) on 2 adjacent RuvB subunits; this complex drives branch migration. In the full resolvosome a probable DNA-RuvA(4)-RuvB(12)-RuvC(2) complex forms which resolves the HJ.

The protein localises to the cytoplasm. Its function is as follows. The RuvA-RuvB-RuvC complex processes Holliday junction (HJ) DNA during genetic recombination and DNA repair, while the RuvA-RuvB complex plays an important role in the rescue of blocked DNA replication forks via replication fork reversal (RFR). RuvA specifically binds to HJ cruciform DNA, conferring on it an open structure. The RuvB hexamer acts as an ATP-dependent pump, pulling dsDNA into and through the RuvAB complex. HJ branch migration allows RuvC to scan DNA until it finds its consensus sequence, where it cleaves and resolves the cruciform DNA. This is Holliday junction branch migration complex subunit RuvA from Aliivibrio fischeri (strain MJ11) (Vibrio fischeri).